The sequence spans 864 residues: A-kinase anchor protein 3 (864 aa).

Phosphoserine; by STK33 is present on Ser-12. The segment at Val-125–Ala-138 is PKA-RII subunit binding domain. Disordered regions lie at residues Asn-190–Gly-235 and Ala-251–Asn-281. Residues Ser-204–Leu-218 are compositionally biased toward polar residues. Phosphoserine is present on Ser-206. A compositionally biased stretch (basic and acidic residues) spans Lys-219–Gly-235. Phosphoserine is present on Ser-405. Tyr-406 carries the post-translational modification Phosphotyrosine. The interval Val-619 to Pro-638 is disordered. Residues Glu-627–Pro-638 are compositionally biased toward basic and acidic residues.

It belongs to the AKAP110 family. In terms of assembly, interacts with ROPN1 and ROPN1L. Interacts with QRICH2. Post-translationally, phosphorylated by STK33 during sperm flagella assembly. Phosphorylated on tyrosine.

Its subcellular location is the cytoplasmic vesicle. It is found in the secretory vesicle. The protein localises to the acrosome. It localises to the cell projection. The protein resides in the cilium. Its subcellular location is the flagellum. Structural component of sperm fibrous sheath. Required for the formation of the subcellular structure of the sperm flagellum, sperm motility and male fertility. The protein is A-kinase anchor protein 3 of Mus musculus (Mouse).